The primary structure comprises 509 residues: Maturase K (509 aa).

The protein belongs to the intron maturase 2 family. MatK subfamily.

The protein resides in the plastid. The protein localises to the chloroplast. Its function is as follows. Usually encoded in the trnK tRNA gene intron. Probably assists in splicing its own and other chloroplast group II introns. The sequence is that of Maturase K from Metasequoia glyptostroboides (Dawn redwood).